The following is a 911-amino-acid chain: Chromatin assembly factor 1 subunit A (911 aa).

Residues 1–31 (MLEEPEAATRTAAAVDCKDRPGFPVKRLIQA) are binds PCNA. The tract at residues 166–200 (HMEEEPGSPGDPKRTGDCQAGSLQSCPELTPGSRT) is disordered. The interval 176-327 (DPKRTGDCQA…LHRDREQQRE (152 aa)) is binds CBX1 and CBX3 chromo shadow domains. The span at 186-200 (GSLQSCPELTPGSRT) shows a compositional bias: polar residues. Ser-190 and Ser-208 each carry phosphoserine. Positions 217 to 230 (FIEKVPVVVLEDIL) match the PxVxL motif motif. Disordered stretches follow at residues 250–408 (SESE…EEEK) and 578–618 (DSDD…VPHG). The segment covering 265–281 (LSHSSTNSSSPTSSPEG) has biased composition (low complexity). A Phosphoserine modification is found at Ser-293. The span at 310–408 (STEKGRSKLH…EEKRLREEEK (99 aa)) shows a compositional bias: basic and acidic residues. Acidic residues-rich tracts occupy residues 578-589 (DSDDEWEEEEPG) and 597-612 (GDED…EDDG). Positions 621 to 657 (SEDEGVTEECADPENHKVHQKLKAKEWDELLAKGKRF) are necessary for homodimerization and competence for chromatin assembly. The tract at residues 639-911 (HQKLKAKEWD…APIPAPTLCK (273 aa)) is binds to p60. Residue Ser-776 is modified to Phosphoserine. Disordered regions lie at residues 819–843 (PSAP…MLLK) and 866–886 (GSGD…DDTD). Residues 827–839 (GSASTEGPGQSTP) are compositionally biased toward polar residues. The residue at position 838 (Thr-838) is a Phosphothreonine. Acidic residues predominate over residues 876 to 886 (DTEEDEEDDTD).

Belongs to the CHAF1A family. In terms of assembly, homodimer. Part of the CAF-1 complex that contains RBBP4, CHAF1B and CHAF1A. CHAF1A binds directly to CHAF1B. Only minor amounts of RBBP4 are complexed with CHAF1A and CHAF1B in G1 phase. Interacts with PCNA; the interaction is direct. Interacts (via the PxVxL motif) with CBX5; the interaction is direct. Interacts with MBD1. Interacts with histones H3.1, H3.2 and H3.1t.

It is found in the nucleus. In terms of biological role, acts as a component of the histone chaperone complex chromatin assembly factor 1 (CAF-1), which assembles histone octamers onto DNA during replication and repair. CAF-1 performs the first step of the nucleosome assembly process, bringing newly synthesized histones H3 and H4 to replicating DNA; histones H2A/H2B can bind to this chromatin precursor subsequent to DNA replication to complete the histone octamer. It may play a role in heterochromatin maintenance in proliferating cells by bringing newly synthesized cbx proteins to heterochromatic DNA replication foci. The polypeptide is Chromatin assembly factor 1 subunit A (Mus musculus (Mouse)).